The sequence spans 348 residues: Centromere protein N-A (348 aa).

It belongs to the CENP-N/CHL4 family.

It is found in the nucleus. The protein resides in the chromosome. It localises to the centromere. In terms of biological role, probable component of a centromeric complex involved in assembly of kinetochore proteins, mitotic progression and chromosome segregation. The sequence is that of Centromere protein N-A (cenpn-a) from Xenopus laevis (African clawed frog).